Here is a 145-residue protein sequence, read N- to C-terminus: Ribosome maturation factor RimP (145 aa).

It belongs to the RimP family.

The protein localises to the cytoplasm. Functionally, required for maturation of 30S ribosomal subunits. This is Ribosome maturation factor RimP from Borrelia garinii subsp. bavariensis (strain ATCC BAA-2496 / DSM 23469 / PBi) (Borreliella bavariensis).